The sequence spans 530 residues: PC4 and SFRS1-interacting protein (530 aa).

Residues methionine 1–asparagine 64 enclose the PWWP domain. Lysine 75 participates in a covalent cross-link: Glycyl lysine isopeptide (Lys-Gly) (interchain with G-Cter in SUMO2). The disordered stretch occupies residues proline 88 to aspartate 349. A compositionally biased stretch (polar residues) spans phenylalanine 92 to alanine 104. A phosphoserine mark is found at serine 102, serine 105, and serine 106. A compositionally biased stretch (basic and acidic residues) spans lysine 113–lysine 135. Residues threonine 115 and threonine 122 each carry the phosphothreonine modification. Phosphoserine is present on serine 129. Position 141 is a phosphothreonine (threonine 141). Positions alanine 144–alanine 153 are enriched in basic residues. Residues arginine 146–glutamine 156 carry the Nuclear localization signal motif. The residue at position 167 (threonine 167) is a Phosphothreonine. Residues serine 177 and serine 206 each carry the phosphoserine modification. Residues glutamate 213 to arginine 261 show a composition bias toward basic and acidic residues. Serine 271 bears the Phosphoserine mark. Threonine 272 carries the post-translational modification Phosphothreonine. A phosphoserine mark is found at serine 273 and serine 275. Positions aspartate 274–glutamate 283 are enriched in acidic residues. Basic residues predominate over residues lysine 287 to methionine 302. Residues glycine 305–aspartate 349 are compositionally biased toward basic and acidic residues. Coiled coils occupy residues glutamine 306–lysine 334 and asparagine 371–glutamate 395. Residues valine 340–threonine 417 form an integrase-binding domain (IBD) region. Serine 434 carries the phosphoserine modification. Threonine 437 is subject to Phosphothreonine. Serine 443 carries the phosphoserine modification. The span at glutamate 446–threonine 473 shows a compositional bias: basic and acidic residues. Residues glutamate 446–asparagine 530 are disordered. Residues glycine 474–glycine 494 show a composition bias toward polar residues. Residues glutamate 498–asparagine 530 are compositionally biased toward basic and acidic residues. Serine 514 carries the phosphoserine modification. Arginine 517 is subject to Citrulline. At serine 522 the chain carries Phosphoserine. Threonine 527 is modified (phosphothreonine).

Belongs to the HDGF family. As to quaternary structure, monomer. Interacts with IFRD1/PC4. Isoform 2 interacts with SFRS1. Isoform 1 interacts (via IBD domain) with POGZ (via IBM motif) and CDCA7L (via IBM motifs). Interacts (via IBD domain) with KMT2A (via IBM motifs) with a moderate affinity whereas interacts with the KMT2A-MEN1 complex with a greater affinity; MEN1 enhances interaction of KMT2A with PSIP1. Interacts with fusion protein KMT2A-MLLT3. Interacts (via IBD domain) with IWS1 (via IBM motif), MED1 (via IBM motif) and DBF4 (via IBM motifs). In terms of assembly, (Microbial infection) Interacts (via IBD domain) with human HIV-1 integrase protein (HIV-1 IN), determining its nuclear localization, its tight association with chromatin and its protection from the proteasome. (Microbial infection) Interacts with HIV-2 IN. Citrullinated by PADI4. As to expression, widely expressed. Expressed at high level in the thymus. Expressed in fetal and adult brain. Expressed in neurons, but not astrocytes. Markedly elevated in fetal as compared to adult brain. In the adult brain, expressed in the subventricular zone (SVZ), in hippocampus, and undetectable elsewhere. In the fetal brain, expressed in the germinal neuroepithelium and cortical plate regions.

It is found in the nucleus. Functionally, transcriptional coactivator involved in neuroepithelial stem cell differentiation and neurogenesis. Involved in particular in lens epithelial cell gene regulation and stress responses. May play an important role in lens epithelial to fiber cell terminal differentiation. May play a protective role during stress-induced apoptosis. Isoform 2 is a more general and stronger transcriptional coactivator. Isoform 2 may also act as an adapter to coordinate pre-mRNA splicing. Cellular cofactor for lentiviral integration. In Homo sapiens (Human), this protein is PC4 and SFRS1-interacting protein (PSIP1).